The primary structure comprises 234 residues: Iron-sulfur cluster co-chaperone protein HscB (234 aa).

A divalent metal cation contacts are provided by C40, C43, C57, and C60. In terms of domain architecture, J spans D71–L143.

This sequence belongs to the HscB family. Interacts with ISCU and HSPA9 to form an iron-sulfur transfer complex. Interacts with SDHAF1 (via the first LYR motif); the interaction recruits the iron-sulfur transfer complex composed of HSC20, HSPA9 and ISCU and mediates the incorporation of iron-sulfur clusters into SDHB which also interacts with HSC20. Interacts with the cytoplasmic form of ISCU and with CIA complex member CIAO1 (via LYR motif). In terms of assembly, homodimer. Interacts with ISCU (cytoplasmic form); this interaction stabilizes the (Fe-S) clusters on ISCU. Interacts with the CIA complex member CIAO1 (via LYR motif).

The protein resides in the cytoplasm. Its subcellular location is the mitochondrion. It functions in the pathway cofactor biosynthesis; iron-sulfur cluster biosynthesis. Acts as a co-chaperone in iron-sulfur cluster assembly in mitochondria. Required for incorporation of iron-sulfur clusters into SDHB, the iron-sulfur protein subunit of succinate dehydrogenase that is involved in complex II of the mitochondrial electron transport chain. Recruited to SDHB by interaction with SDHAF1 which first binds SDHB and then recruits the iron-sulfur transfer complex formed by HSC20, HSPA9 and ISCU through direct binding to HSC20. Plays an essential role in hematopoiesis. In terms of biological role, acts as a co-chaperone in iron-sulfur cluster assembly in the cytoplasm. Also mediates complex formation between components of the cytosolic iron-sulfur biogenesis pathway and the CIA targeting complex composed of CIAO1, DIPK1B/FAM69B and MMS19 by binding directly to the scaffold protein ISCU and to CIAO1. This facilitates iron-sulfur cluster insertion into a number of cytoplasmic and nuclear proteins including POLD1, ELP3, DPYD and PPAT. The sequence is that of Iron-sulfur cluster co-chaperone protein HscB from Mus musculus (Mouse).